The following is a 425-amino-acid chain: tRNA(Ile)-lysidine synthase (425 aa).

27–32 is an ATP binding site; it reads SGGLDS.

Belongs to the tRNA(Ile)-lysidine synthase family.

It is found in the cytoplasm. The enzyme catalyses cytidine(34) in tRNA(Ile2) + L-lysine + ATP = lysidine(34) in tRNA(Ile2) + AMP + diphosphate + H(+). Its function is as follows. Ligates lysine onto the cytidine present at position 34 of the AUA codon-specific tRNA(Ile) that contains the anticodon CAU, in an ATP-dependent manner. Cytidine is converted to lysidine, thus changing the amino acid specificity of the tRNA from methionine to isoleucine. The polypeptide is tRNA(Ile)-lysidine synthase (Streptococcus pneumoniae (strain JJA)).